Here is a 92-residue protein sequence, read N- to C-terminus: Small ribosomal subunit protein uS19c (92 aa).

The protein belongs to the universal ribosomal protein uS19 family.

The protein resides in the plastid. It localises to the chloroplast. Functionally, protein S19 forms a complex with S13 that binds strongly to the 16S ribosomal RNA. The chain is Small ribosomal subunit protein uS19c from Phaeodactylum tricornutum (strain CCAP 1055/1).